The sequence spans 747 residues: ATPase family gene 2 protein homolog B (747 aa).

An N-acetylmethionine modification is found at Met-1. Residues 234 to 241 and 500 to 507 contribute to the ATP site; these read GPPGVGKT and GPPGCAKT.

It belongs to the AAA ATPase family. AFG2 subfamily. Part of the 55LCC heterohexameric ATPase complex composed at least of AIRIM, AFG2A, AFG2B and CINP. Associates with pre-60S ribosomal particles. In adult ear, expressed at low levels in neurosensory hair cells (inner and outer) and supporting cells (pillar and Deiter cells).

It is found in the cytoplasm. The protein resides in the cytoskeleton. It localises to the spindle. The protein localises to the nucleus. It catalyses the reaction ATP + H2O = ADP + phosphate + H(+). In the context of 55LCC heterohexameric ATPase complex, the ATPase activity is stimulated by DNA binding and inhibited in presence of RNA. In terms of biological role, ATP-dependent chaperone part of the 55LCC heterohexameric ATPase complex which is chromatin-associated and promotes replisome proteostasis to maintain replication fork progression and genome stability. Required for replication fork progression, sister chromatid cohesion, and chromosome stability. The ATPase activity is specifically enhanced by replication fork DNA and is coupled to cysteine protease-dependent cleavage of replisome substrates in response to replication fork damage. Uses ATPase activity to process replisome substrates in S-phase, facilitating their proteolytic turnover from chromatin to ensure DNA replication and mitotic fidelity. Plays an essential role in the cytoplasmic maturation steps of pre-60S ribosomal particles by promoting the release of shuttling protein RSL24D1/RLP24 from the pre-ribosomal particles. In Mus musculus (Mouse), this protein is ATPase family gene 2 protein homolog B (Afg2b).